A 1783-amino-acid chain; its full sequence is Trans-splicing factor Raa3, chloroplastic (1783 aa).

Residues 1-40 (MKADLATAKGSSPAFSAPRTYRARLLSRCLNKCFNTVLVS) constitute a chloroplast transit peptide. Disordered regions lie at residues 97–378 (ATTH…VGVN), 420–484 (ATSA…VAAQ), 563–610 (ARVG…SATK), 652–709 (STEP…SPAA), 918–971 (AAPT…QRAS), 1395–1427 (RDAKRHVRQSAAAAAAAAAAAQDQRQEQHQQHQ), 1476–1506 (PAPAHMQQQPQSSGTGCQKSRRRRMRYRRSR), and 1620–1639 (VKGRGRGRRTAARATTDVQG). A compositionally biased stretch (gly residues) spans 105–118 (DSGGQGPAAAGGRG). Low complexity-rich tracts occupy residues 126–157 (QAAASAATTVSAAPQTGATKPAATAKTTPQRP), 186–205 (AVDAASDAAPDVAAASPAPA), and 224–242 (AGKPRASGRAPAAPGVGPQ). Residues 256–273 (DESHMGLTHRDQGHDERI) show a composition bias toward basic and acidic residues. The span at 277–289 (AGEAWKAGAVAAP) shows a compositional bias: low complexity. Positions 307–316 (LASSALGTHS) are enriched in polar residues. Composition is skewed to low complexity over residues 343–374 (SGSSSSSSGRNSSSNSNTSTSSTSNGVTITSN), 420–436 (ATSAASSSTSSASSSSS), 577–599 (RPVQGQSGQVPQVGQGPVQSQPG), 655–669 (PLAASAPTTSLASAS), 676–709 (SSSNAHSSAAASEAAAGTVRAPTDTAAPAASPAA), 928–970 (SAAA…PQRA), and 1403–1417 (QSAAAAAAAAAAAQD). Basic residues-rich tracts occupy residues 1494 to 1506 (KSRRRRMRYRRSR) and 1620 to 1630 (VKGRGRGRRTA). The RAP domain maps to 1713–1772 (LAVGAAAGGAVIRNSRWLLSGAGALRRRLLTHAGWLVVPVRERQWKDLRSAEQQRRVVRE).

In terms of assembly, part of a 1700 kDa complex that includes the precursor RNA to exon 1 and the tscA RNA.

It localises to the plastid. It is found in the chloroplast stroma. In terms of biological role, required for trans-splicing of exons 1 and 2 of the chloroplast encoded psaA mRNA (a group II intron). May be required for stability of the chloroplast RNA-protein complex in which it is found. The protein is Trans-splicing factor Raa3, chloroplastic (RAA3) of Chlamydomonas reinhardtii (Chlamydomonas smithii).